We begin with the raw amino-acid sequence, 177 residues long: Ribonuclease H (177 aa).

One can recognise an RNase H type-1 domain in the interval 1–142 (MSKQVEIFTD…ADELAREGMA (142 aa)). Positions 10, 48, 70, and 134 each coordinate Mg(2+). The segment covering 126–138 (GHTENERADELAR) has biased composition (basic and acidic residues). The interval 126-177 (GHTENERADELAREGMAPFKKGSFKPAASAPKPDAQLKQPVATKARRSTQSY) is disordered.

It belongs to the RNase H family. In terms of assembly, monomer. Requires Mg(2+) as cofactor.

The protein localises to the cytoplasm. The catalysed reaction is Endonucleolytic cleavage to 5'-phosphomonoester.. Endonuclease that specifically degrades the RNA of RNA-DNA hybrids. In Mesorhizobium japonicum (strain LMG 29417 / CECT 9101 / MAFF 303099) (Mesorhizobium loti (strain MAFF 303099)), this protein is Ribonuclease H.